The sequence spans 76 residues: Kappa-actitoxin-Avd4e (76 aa).

An N-terminal signal peptide occupies residues 1–19 (MNKALFLCLVVLCAAVVFA). Positions 20–31 (AEDLQKAKHAPF) are excised as a propeptide. Cystine bridges form between cysteine 37–cysteine 72, cysteine 39–cysteine 65, and cysteine 55–cysteine 73. The Cell attachment site signature appears at 45–47 (RGD).

The protein belongs to the sea anemone type 3 (BDS) potassium channel toxin family. As to expression, moderately expressed in the ectodermal tissue from the distal and proximal tentacles, body wall, and oral disk.

The protein localises to the secreted. Its subcellular location is the nematocyst. Its function is as follows. Is member of a fraction that shows antiangiogenic activity, since it inhibits human microvascular endothelial cells (HMEC) tubulogenesis. This protein could be a kunitz-type inhibitor with a RGD motif that could block angiogenesis in binding on integrins. Blocks Kv3 voltage-gated potassium channels. Reduces blood pressure. This chain is Kappa-actitoxin-Avd4e, found in Anemonia viridis (Snakelocks anemone).